We begin with the raw amino-acid sequence, 351 residues long: Molybdenum import ATP-binding protein ModC (351 aa).

The ABC transporter domain occupies 1–229; it reads MLKINVKKQL…PLFLPWKLED (229 aa). 31-38 is a binding site for ATP; that stretch reads GLSGSGKT. Positions 289–351 constitute a Mop domain; sequence KTSIRNILHG…FAQIKAVSVL (63 aa).

Belongs to the ABC transporter superfamily. Molybdate importer (TC 3.A.1.8) family. As to quaternary structure, the complex is composed of two ATP-binding proteins (ModC), two transmembrane proteins (ModB) and a solute-binding protein (ModA).

It is found in the cell inner membrane. The enzyme catalyses molybdate(out) + ATP + H2O = molybdate(in) + ADP + phosphate + H(+). In terms of biological role, part of the ABC transporter complex ModABC involved in molybdenum import. Responsible for energy coupling to the transport system. This is Molybdenum import ATP-binding protein ModC from Pasteurella multocida (strain Pm70).